The primary structure comprises 409 residues: Astacin-like metalloendopeptidase (409 aa).

Residues 1-19 form the signal peptide; that stretch reads MDLKMLLIFTAFLLPAVLG. A propeptide spanning residues 20–86 is cleaved from the precursor; it reads FPIQDNYENS…EGDIVPRRSR (67 aa). Over residues 30–42 the composition is skewed to low complexity; the sequence is TATSESTQVTTEE. The disordered stretch occupies residues 30-55; it reads TATSESTQVTTEESIYDSPSPTETDS. Residues 87–285 form the Peptidase M12A domain; that stretch reads SAFNCRNCYW…AKINKLYNCS (199 aa). Disulfide bonds link Cys91-Cys94, Cys134-Cys284, Cys155-Cys175, Cys287-Cys313, and Cys339-Cys362. Residue His183 participates in Zn(2+) binding. Glu184 is a catalytic residue. Positions 187 and 193 each coordinate Zn(2+). A CUB domain is found at 287-399; sequence CSTIIDAAFG…SGFQATFTSA (113 aa).

It depends on Zn(2+) as a cofactor.

The protein resides in the cytoplasm. The protein localises to the cell membrane. It localises to the cytoplasmic vesicle. Its subcellular location is the secretory vesicle. It is found in the cortical granule. In terms of biological role, probable oocyte-specific oolemmal receptor involved in sperm and egg adhesion and fertilization. Protease which may play a role in the breaking down of the vitelline membrane (days 0-5) and possibly, in the digestion of the egg white (days 9-12). The polypeptide is Astacin-like metalloendopeptidase (Coturnix japonica (Japanese quail)).